The sequence spans 101 residues: Replication restart protein PriB (101 aa).

The SSB domain maps to M1–T101.

This sequence belongs to the PriB family. Homodimer. Interacts with PriA and DnaT. Component of the replication restart primosome. Primosome assembly occurs via a 'hand-off' mechanism. PriA binds to replication forks, subsequently PriB then DnaT bind; DnaT then displaces ssDNA to generate the helicase loading substrate.

Involved in the restart of stalled replication forks, which reloads the replicative helicase on sites other than the origin of replication; the PriA-PriB pathway is the major replication restart pathway. During primosome assembly it facilitates complex formation between PriA and DnaT on DNA; stabilizes PriA on DNA. Stimulates the DNA unwinding activity of PriA helicase. In Shewanella putrefaciens (strain CN-32 / ATCC BAA-453), this protein is Replication restart protein PriB.